Here is an 87-residue protein sequence, read N- to C-terminus: MSRLLLIVLLACSIASAIGVVYMRHMHRKLFVQLSKLEHSRDELNIEFGRLQLEQATWAESNRVDQVSRERIGMKFPETSDIVVIRP.

The Cytoplasmic segment spans residues 1–3 (MSR). A helical transmembrane segment spans residues 4-23 (LLLIVLLACSIASAIGVVYM). The Periplasmic segment spans residues 24 to 87 (RHMHRKLFVQ…ETSDIVVIRP (64 aa)).

It belongs to the FtsL family. As to quaternary structure, part of a complex composed of FtsB, FtsL and FtsQ.

Its subcellular location is the cell inner membrane. In terms of biological role, essential cell division protein. May link together the upstream cell division proteins, which are predominantly cytoplasmic, with the downstream cell division proteins, which are predominantly periplasmic. The protein is Cell division protein FtsL of Xanthomonas campestris pv. campestris (strain ATCC 33913 / DSM 3586 / NCPPB 528 / LMG 568 / P 25).